The following is a 336-amino-acid chain: Ketol-acid reductoisomerase (NADP(+)) (336 aa).

The KARI N-terminal Rossmann domain maps to 3–183 (ATMYYDRDVS…GGTRAGVLET (181 aa)). NADP(+) contacts are provided by residues 26–29 (YGSQ), Arg-49, Ser-52, Ser-54, and 84–87 (DETQ). His-109 is an active-site residue. Residue Gly-135 participates in NADP(+) binding. Positions 184–329 (TFKEETETDL…RELRSKMPFI (146 aa)) constitute a KARI C-terminal knotted domain. The Mg(2+) site is built by Asp-192, Glu-196, Glu-228, and Glu-232. Ser-253 lines the substrate pocket.

This sequence belongs to the ketol-acid reductoisomerase family. Mg(2+) is required as a cofactor.

The catalysed reaction is (2R)-2,3-dihydroxy-3-methylbutanoate + NADP(+) = (2S)-2-acetolactate + NADPH + H(+). The enzyme catalyses (2R,3R)-2,3-dihydroxy-3-methylpentanoate + NADP(+) = (S)-2-ethyl-2-hydroxy-3-oxobutanoate + NADPH + H(+). It participates in amino-acid biosynthesis; L-isoleucine biosynthesis; L-isoleucine from 2-oxobutanoate: step 2/4. Its pathway is amino-acid biosynthesis; L-valine biosynthesis; L-valine from pyruvate: step 2/4. Involved in the biosynthesis of branched-chain amino acids (BCAA). Catalyzes an alkyl-migration followed by a ketol-acid reduction of (S)-2-acetolactate (S2AL) to yield (R)-2,3-dihydroxy-isovalerate. In the isomerase reaction, S2AL is rearranged via a Mg-dependent methyl migration to produce 3-hydroxy-3-methyl-2-ketobutyrate (HMKB). In the reductase reaction, this 2-ketoacid undergoes a metal-dependent reduction by NADPH to yield (R)-2,3-dihydroxy-isovalerate. This Deinococcus geothermalis (strain DSM 11300 / CIP 105573 / AG-3a) protein is Ketol-acid reductoisomerase (NADP(+)).